The following is a 239-amino-acid chain: Proteasome subunit beta (239 aa).

The segment covering 1–16 (MRQPDSSLPRTGQDHT) has biased composition (polar residues). Positions 1-32 (MRQPDSSLPRTGQDHTLSPYEPELGEVPSNDL) are disordered. Residues 1 to 44 (MRQPDSSLPRTGQDHTLSPYEPELGEVPSNDLSMADLDNVNKTG) constitute a propeptide, removed in mature form; by autocatalysis. Residue T45 is the Nucleophile of the active site.

Belongs to the peptidase T1B family. As to quaternary structure, the 20S proteasome core is composed of 14 alpha and 14 beta subunits that assemble into four stacked heptameric rings, resulting in a barrel-shaped structure. The two inner rings, each composed of seven catalytic beta subunits, are sandwiched by two outer rings, each composed of seven alpha subunits. The catalytic chamber with the active sites is on the inside of the barrel. Has a gated structure, the ends of the cylinder being occluded by the N-termini of the alpha-subunits. Is capped at one or both ends by the proteasome regulatory ATPase, PAN.

The protein localises to the cytoplasm. It carries out the reaction Cleavage of peptide bonds with very broad specificity.. Its activity is regulated as follows. The formation of the proteasomal ATPase PAN-20S proteasome complex, via the docking of the C-termini of PAN into the intersubunit pockets in the alpha-rings, triggers opening of the gate for substrate entry. Interconversion between the open-gate and close-gate conformations leads to a dynamic regulation of the 20S proteasome proteolysis activity. Functionally, component of the proteasome core, a large protease complex with broad specificity involved in protein degradation. This chain is Proteasome subunit beta, found in Natronomonas pharaonis (strain ATCC 35678 / DSM 2160 / CIP 103997 / JCM 8858 / NBRC 14720 / NCIMB 2260 / Gabara) (Halobacterium pharaonis).